A 153-amino-acid polypeptide reads, in one-letter code: Ribonuclease H (153 aa).

The region spanning 1–141 (MKLVEIFTDG…CDELAKAGAN (141 aa)) is the RNase H type-1 domain. Mg(2+)-binding residues include D9, E47, D69, and D133.

Belongs to the RNase H family. In terms of assembly, monomer. Mg(2+) serves as cofactor.

It is found in the cytoplasm. It catalyses the reaction Endonucleolytic cleavage to 5'-phosphomonoester.. Its function is as follows. Endonuclease that specifically degrades the RNA of RNA-DNA hybrids. The polypeptide is Ribonuclease H (Actinobacillus pleuropneumoniae serotype 5b (strain L20)).